The primary structure comprises 787 residues: Signal transducer and activator of transcription 5B (787 aa).

Tyrosine 90 bears the Phosphotyrosine mark. A Phosphoserine modification is found at serine 128. Residues 589-686 (WNDGAILGFV…EVYSKYYTPV (98 aa)) enclose the SH2 domain. Residue tyrosine 682 is modified to Phosphotyrosine. At tyrosine 699 the chain carries Phosphotyrosine; by HCK, JAK and PTK6.

Belongs to the transcription factor STAT family. Upon activation, forms a homodimer or a heterodimer with a related family member. Binds NR3C1. Interacts with NCOA1. Interacts with NMI. Interacts with SOCS7. Interacts (via SH2 domain) with INSR. Interacts with CPEB3; this inhibits STAT5B-mediated transcriptional activation. Tyrosine phosphorylated in response to signaling via activated KIT, resulting in translocation to the nucleus. Tyrosine phosphorylated in response to signaling via activated FLT3; wild-type FLT3 results in much weaker phosphorylation than constitutively activated mutant FLT3. Alternatively, can be phosphorylated by JAK2. Phosphorylation at Tyr-699 by PTK6 or HCK leads to an increase of its transcriptional activity.

It localises to the cytoplasm. Its subcellular location is the nucleus. In terms of biological role, carries out a dual function: signal transduction and activation of transcription. Mediates cellular responses to the cytokine KITLG/SCF and other growth factors. Binds to the GAS element and activates PRL-induced transcription. Positively regulates hematopoietic/erythroid differentiation. The sequence is that of Signal transducer and activator of transcription 5B (STAT5B) from Bos taurus (Bovine).